The following is a 234-amino-acid chain: Peptidyl-prolyl cis-trans isomerase, rhodopsin-specific isozyme (234 aa).

A signal peptide spans 1-19; it reads MNILKILILLELIYTCVSG. The region spanning 29–187 is the PPIase cyclophilin-type domain; it reads YMDVKHQKKP…DPVIIVNCGE (159 aa). N-linked (GlcNAc...) asparagine glycosylation occurs at Asn-67. A helical membrane pass occupies residues 202–222; sequence ILGWIKAAGLPFCSSFIVLMI.

This sequence belongs to the cyclophilin-type PPIase family. In terms of tissue distribution, expressed specifically in photoreceptor cells.

The protein localises to the membrane. The catalysed reaction is [protein]-peptidylproline (omega=180) = [protein]-peptidylproline (omega=0). Functionally, PPIases accelerate the folding of proteins. It catalyzes the cis-trans isomerization of proline imidic peptide bonds in oligopeptides. Acts on the folding of rhodopsin RH1 and RH2 (but not RH3) and is required for visual transduction. In Calliphora vicina (Blue blowfly), this protein is Peptidyl-prolyl cis-trans isomerase, rhodopsin-specific isozyme (NINAA).